The following is a 1190-amino-acid chain: Pyruvate-flavodoxin oxidoreductase (1190 aa).

2 4Fe-4S ferredoxin-type domains span residues 687 to 716 (EIPV…SKVY) and 743 to 773 (FTIQ…PRKK). Residues Cys696, Cys699, Cys702, Cys706, Cys752, Cys755, Cys758, Cys762, Cys826, Cys829, Cys854, and Cys1089 each contribute to the [4Fe-4S] cluster site.

This sequence belongs to the pyruvate:ferredoxin/flavodoxin oxidoreductase family. Requires [4Fe-4S] cluster as cofactor.

The enzyme catalyses oxidized [flavodoxin] + pyruvate + CoA + 2 H(+) = reduced [flavodoxin] + acetyl-CoA + CO2. Its function is as follows. Oxidoreductase required for the transfer of electrons from pyruvate to flavodoxin, which reduces nitrogenase. This chain is Pyruvate-flavodoxin oxidoreductase (nifJ), found in Trichormus variabilis (strain ATCC 29413 / PCC 7937) (Anabaena variabilis).